The chain runs to 188 residues: Small acidic protein (188 aa).

The tract at residues methionine 1–serine 188 is disordered. The segment covering glycine 49 to glutamate 82 has biased composition (basic and acidic residues). Polar residues predominate over residues histidine 83 to glycine 95. Over residues serine 130–threonine 152 the composition is skewed to acidic residues. Residues alanine 153–serine 176 show a composition bias toward basic and acidic residues.

The protein belongs to the SMAP family.

The sequence is that of Small acidic protein (smap) from Xenopus laevis (African clawed frog).